The primary structure comprises 430 residues: Type II methyltransferase M.Sau96I (430 aa).

The 55-residue stretch at 9–63 folds into the HTH cro/C1-type domain; it reads IEKMKNQNIKTQTELAEKIDISKSQLSFMFSDEYEPLKKNVIKLADVLKVSPNDI. Positions 99–429 constitute an SAM-dependent MTase C5-type domain; sequence YNVFETFAGA…KSLVHYLNQF (331 aa). Residue Cys-174 is part of the active site.

Belongs to the class I-like SAM-binding methyltransferase superfamily. C5-methyltransferase family.

It catalyses the reaction a 2'-deoxycytidine in DNA + S-adenosyl-L-methionine = a 5-methyl-2'-deoxycytidine in DNA + S-adenosyl-L-homocysteine + H(+). Its function is as follows. A methylase that recognizes the double-stranded sequence 5'-GGNCC-3', methylates C-4 on both strands, and protects the DNA from cleavage by the Sau96I endonuclease. In Staphylococcus aureus, this protein is Type II methyltransferase M.Sau96I.